Here is a 1350-residue protein sequence, read N- to C-terminus: MDTVHEGHHGSDSSSSGDTVNVEVTNYEKTQLGQAPLPLAPAPTPAVPVNEKKHKSQKEKKHKGQNEKQDKDSDDEGEDPFAHLPDHEKAVLKRQLDIPTVKVTYFMLFRYATLNDKLLMVLSALSSIIGGALLPLMTIVFGGLTTTFKDFFRQTITQEHFNHELSRFSLYFLYLAIGEFVFVYIATAGFLYTGEHVAGKIRENFLKAILRQNIAFFDQLGAGEITTRITSDTNLVQDGISEKVGLTLTALATFITAFVVSFIKDWKLTLILMSTVFAIVFTMGGMSGFIVKFNKASLASYAEGGTVAEEVISSVRNAKAFNTEAKLTRAYDAHLAVAEKWGFKMKAVTGSMIGFLMCYVYLNYSLAFWMGSRYLVSGRIEVGDVLTIILSIMIGAFALGNVAPNIQAFTTSVAAAAKIFATIDRVSPLDPSSESGETLKSVEGHIELRNIRHIYPSRPEVTVMEDVSLIVPAGKTTALVGESGSGKSTIVGLVERFYDPVGGTVYLDGQDISSLNLRWLRRQISLVSQEPTLFATTIFGNIRHGLIGTAYESESEEKIRELVENAARFANAHDFITGLPEGYATNVGERGFLLSGGQKQRIAIARAMVSDPKILLLDEATSALDTKSEGVVQAALDKAALGRTTIVIAHRLSTIKGADNIVVMSRGRIVEQGTHDALLEKQGAYYNLVEAQRIAAENENKDQEEVAILDEKDQNLKHETTKGEQPEDGLKLARTQTGKSQSSIVLADKKAEVENRYSLWTLIKVVAVFNRQEWLYMTIGIICSVITGGGNPTQAVFFAKAVTALSGDNSTPQGKATIRSQANFWSWMYFMLALVQFSAFLIQGYVFAVCSERLVHRAREQAFKTMLRQDIAFFDKEENTAGALTSFLSTETTHLAGMSGVTLGTILSVIVTLVAAFSVSLAIQWKLSLVCISTVPILLACGFLRFWMLARFQATAKKAYEKSASYACEATSAIRTVASLTREDDVHLHYHDQLVDQERKSLISILRSSSLYAASQSLIFCCTALGFWYGGTLIAKKEIGQFQFFLCFSAVIFGAQSAGTIFSFAPDMGKAKQAAAELKALFDRKPEIDSWSEDGEQLSSVEGHIEFRDVHFRYPTRPEQPVLRGLNLTVKPGQYVALVGASGCGKSTTIQLLERFYDPLAGGVYIDGKEVSSLNVNNYRSWIALVSQEPTLYQGTVKENILLGADRENVPQEAIEQACRDANIYDFIMSLPDAFDTIVGSKGSMLSGGQKQRIAIARALLRDPKILLLDEATSALDSESEKVVQAALDKAAKGRTTIAVAHRLSTIQRADMIYVFDAGKVVESGTHTELIHLRGRYWELVNLQSLGKAQ.

Residues 1–11 are compositionally biased toward basic and acidic residues; it reads MDTVHEGHHGS. Residues 1-84 are disordered; the sequence is MDTVHEGHHG…DEGEDPFAHL (84 aa). Residues 22–33 show a composition bias toward polar residues; sequence VEVTNYEKTQLG. A compositionally biased stretch (basic residues) spans 52–63; that stretch reads KKHKSQKEKKHK. Positions 121–411 constitute an ABC transmembrane type-1 1 domain; it reads VLSALSSIIG…VAPNIQAFTT (291 aa). 6 helical membrane-spanning segments follow: residues 124 to 144, 170 to 190, 243 to 263, 271 to 291, 350 to 370, and 380 to 400; these read ALSS…FGGL, LYFL…TAGF, KVGL…VSFI, ILMS…GFIV, GSMI…AFWM, and IEVG…FALG. The ABC transporter 1 domain maps to 446-691; that stretch reads IELRNIRHIY…QGAYYNLVEA (246 aa). 481-488 contacts ATP; that stretch reads GESGSGKS. Over residues 712-731 the composition is skewed to basic and acidic residues; that stretch reads KDQNLKHETTKGEQPEDGLK. Positions 712–734 are disordered; that stretch reads KDQNLKHETTKGEQPEDGLKLAR. A run of 6 helical transmembrane segments spans residues 779 to 799, 830 to 850, 903 to 923, 929 to 949, 1014 to 1034, and 1044 to 1064; these read IGII…VFFA, FMLA…FAVC, LGTI…SLAI, LVCI…FWML, ASQS…GTLI, and FFLC…IFSF. The 292-residue stretch at 779-1070 folds into the ABC transmembrane type-1 2 domain; that stretch reads IGIICSVITG…IFSFAPDMGK (292 aa). The region spanning 1105–1343 is the ABC transporter 2 domain; sequence IEFRDVHFRY…RGRYWELVNL (239 aa). N1127 carries an N-linked (GlcNAc...) asparagine glycan. 1140-1147 is an ATP binding site; the sequence is GASGCGKS.

Belongs to the ABC transporter superfamily. ABCB family. Multidrug resistance exporter (TC 3.A.1.201) subfamily.

The protein localises to the cell membrane. ABC-type transporter that is involved in the secretion of liamocins, glycolipids (also called heavy oils) composed of a single mannitol or arabitol headgroup linked to either three, four or even six 3,5-dihydroxydecanoic ester tail-groups. This chain is ABC-type transporter MDR1, found in Aureobasidium melanogenum (Aureobasidium pullulans var. melanogenum).